Reading from the N-terminus, the 369-residue chain is UPF0284 protein sll1500 (369 aa).

Belongs to the UPF0284 family.

The chain is UPF0284 protein sll1500 from Synechocystis sp. (strain ATCC 27184 / PCC 6803 / Kazusa).